The sequence spans 1699 residues: Hybrid signal transduction histidine kinase E (1699 aa).

Disordered regions lie at residues 1 to 32 (MDKLKINNNLSPPSSPSSSTTTPNLSSTNLEN) and 58 to 97 (NNIIINNNNNNNNNNNNNNNNNNNNSNNNNNNINNNNPNV). Over residues 7–32 (NNNLSPPSSPSSSTTTPNLSSTNLEN) the composition is skewed to low complexity. Helical transmembrane passes span 142-162 (CILLGECGVYVFIYMFFLIFL), 164-184 (SFYPIFICGIVSMIVLYIVST), 191-211 (LVALIYIFVQSILNFTFFLQI), 238-258 (LNFLFIMNLILSLISIQIFFP), 262-282 (FSITLTCSLNIFNIIIHLISI), and 295-315 (NLIVPITVSFLLSFYSYILSI). The segment covering 412–432 (ITNGGNNKQTSTTSANSTPRY) has biased composition (polar residues). Disordered regions lie at residues 412 to 439 (ITNGGNNKQTSTTSANSTPRYNNYNNNN) and 542 to 593 (LLNN…NISN). A compositionally biased stretch (low complexity) spans 544 to 593 (NNNNNNNNNNNNNNNNNNNNNNNNNNSNNNNNNNSNNNNNNNNINNNISN). One can recognise a Histidine kinase domain in the interval 678–950 (TVSHEVRTPI…AFSFTSILST (273 aa)). H681 carries the phosphohistidine; by autocatalysis modification. 5 disordered regions span residues 819–866 (NNNN…NNNN), 1018–1054 (NNNNNNNNNNNNNNNNNNNNNNNNDNNNNNNNNNDNN), 1186–1239 (KKQQ…RKSS), 1252–1294 (MVQV…NPNN), and 1351–1406 (SIPI…SPPP). Over residues 1198-1212 (MGDTLSSTKSPQYTN) the composition is skewed to polar residues. Positions 1219–1239 (SSSSNGSLNKSNRSNLLRKSS) are enriched in low complexity. A compositionally biased stretch (polar residues) spans 1271–1282 (KGNNSNPNSTEL). 2 stretches are compositionally biased toward low complexity: residues 1283–1294 (NSTNSVNGNPNN) and 1355–1392 (NINNNDNNNNNNNNNNNNNNNNNNNNNNNNNNNNNNNN). The Response regulatory domain maps to 1575–1695 (NALIVDDTEL…TLKDTLLKWG (121 aa)). D1625 is subject to 4-aspartylphosphate.

The protein resides in the membrane. The enzyme catalyses ATP + protein L-histidine = ADP + protein N-phospho-L-histidine.. Its function is as follows. May act in a signal transduction pathway. This protein undergoes an ATP-dependent autophosphorylation at a conserved histidine residue in the kinase core, and a phosphoryl group is then transferred to a conserved aspartate residue in the receiver domain. This is Hybrid signal transduction histidine kinase E (dhkE) from Dictyostelium discoideum (Social amoeba).